Reading from the N-terminus, the 479-residue chain is Sulfate adenylyltransferase subunit 1 (479 aa).

The tr-type G domain maps to 25–239 (KSLLRFLTCG…EVLETVDIQR (215 aa)). The interval 34-41 (GSVDDGKS) is G1. 34–41 (GSVDDGKS) is a GTP binding site. The G2 stretch occupies residues 92 to 96 (GITID). A G3 region spans residues 113–116 (DTPG). GTP-binding positions include 113-117 (DTPGH) and 168-171 (NKMD). A G4 region spans residues 168 to 171 (NKMD). The G5 stretch occupies residues 206–208 (SAL).

It belongs to the TRAFAC class translation factor GTPase superfamily. Classic translation factor GTPase family. CysN/NodQ subfamily. Heterodimer composed of CysD, the smaller subunit, and CysN.

It catalyses the reaction sulfate + ATP + H(+) = adenosine 5'-phosphosulfate + diphosphate. It functions in the pathway sulfur metabolism; hydrogen sulfide biosynthesis; sulfite from sulfate: step 1/3. With CysD forms the ATP sulfurylase (ATPS) that catalyzes the adenylation of sulfate producing adenosine 5'-phosphosulfate (APS) and diphosphate, the first enzymatic step in sulfur assimilation pathway. APS synthesis involves the formation of a high-energy phosphoric-sulfuric acid anhydride bond driven by GTP hydrolysis by CysN coupled to ATP hydrolysis by CysD. This is Sulfate adenylyltransferase subunit 1 from Salmonella choleraesuis (strain SC-B67).